Consider the following 194-residue polypeptide: BCL2/adenovirus E1B 19 kDa protein-interacting protein 3 (194 aa).

Positions 1–102 are disordered; the sequence is MSQNGAPGMQ…SQSEEDDIER (102 aa). The segment covering 42–55 has biased composition (basic and acidic residues); that stretch reads DMEKILLDAQHESG. Phosphoserine occurs at positions 54, 66, 86, 92, and 95. A compositionally biased stretch (low complexity) spans 56 to 69; the sequence is RSSSKSSHCDSPPR. Residues 78-88 are compositionally biased toward basic and acidic residues; the sequence is RASETDTHSIG. The short motif at 100–125 is the BH3 element; the sequence is IERRKEVESILKKNSDWIWDWSSRPE. Residues 164–184 traverse the membrane as a helical segment; that stretch reads VFLPSLLLSHLLAIGLGIYIG.

It belongs to the NIP3 family. Homodimer. Binds to BCL2. Interacts with BNIP3L and ACAA2. Interacts (via BH3 domain) with SPATA18 (via coiled-coil domains). Interacts with BOK; promotes BOK oligomerization. Interacts with PPTC7; this interaction promotes BNIP3 degradation. In terms of assembly, (Microbial infection) Interacts with adenovirus E1B 19 kDa protein. As to quaternary structure, (Microbial infection) Interacts with Epstein-Barr virus BHRF1.

The protein resides in the mitochondrion. It is found in the mitochondrion outer membrane. In terms of biological role, apoptosis-inducing protein that can overcome BCL2 suppression. May play a role in repartitioning calcium between the two major intracellular calcium stores in association with BCL2. Involved in mitochondrial quality control via its interaction with SPATA18/MIEAP: in response to mitochondrial damage, participates in mitochondrial protein catabolic process (also named MALM) leading to the degradation of damaged proteins inside mitochondria. The physical interaction of SPATA18/MIEAP, BNIP3 and BNIP3L/NIX at the mitochondrial outer membrane regulates the opening of a pore in the mitochondrial double membrane in order to mediate the translocation of lysosomal proteins from the cytoplasm to the mitochondrial matrix. Plays an important role in the calprotectin (S100A8/A9)-induced cell death pathway. In Homo sapiens (Human), this protein is BCL2/adenovirus E1B 19 kDa protein-interacting protein 3.